Reading from the N-terminus, the 336-residue chain is Homoserine dehydrogenase (336 aa).

Phenylalanine 8 contributes to the NADPH binding site. 3 residues coordinate NAD(+): alanine 10, isoleucine 11, and threonine 94. NADPH contacts are provided by isoleucine 11, threonine 94, and lysine 123. Isoleucine 11, threonine 94, and lysine 123 together coordinate NADP(+). 3 residues coordinate Na(+): glutamate 147, valine 150, and glycine 152. Positions 205 and 208 each coordinate NADP(+). L-homoserine-binding residues include glutamate 208 and aspartate 219. Lysine 223 (proton donor) is an active-site residue. Glycine 315 contacts NADPH. Glycine 315 provides a ligand contact to NAD(+). Glycine 315 provides a ligand contact to NADP(+).

Belongs to the homoserine dehydrogenase family. The cofactor is a metal cation.

It carries out the reaction L-homoserine + NADP(+) = L-aspartate 4-semialdehyde + NADPH + H(+). It catalyses the reaction L-homoserine + NAD(+) = L-aspartate 4-semialdehyde + NADH + H(+). Its pathway is amino-acid biosynthesis; L-methionine biosynthesis via de novo pathway; L-homoserine from L-aspartate: step 3/3. It participates in amino-acid biosynthesis; L-threonine biosynthesis; L-threonine from L-aspartate: step 3/5. Catalyzes the conversion of L-aspartate-beta-semialdehyde (L-Asa) to L-homoserine (L-Hse), the third step in the biosynthesis of threonine and methionine from aspartate. In Methanocaldococcus jannaschii (strain ATCC 43067 / DSM 2661 / JAL-1 / JCM 10045 / NBRC 100440) (Methanococcus jannaschii), this protein is Homoserine dehydrogenase (hom).